The sequence spans 260 residues: Electron transfer flavoprotein subunit beta (260 aa).

The protein belongs to the ETF beta-subunit/FixA family. Heterodimer of an alpha and a beta subunit. FAD is required as a cofactor. Requires AMP as cofactor.

Functionally, the electron transfer flavoprotein serves as a specific electron acceptor for other dehydrogenases. It transfers the electrons to the main respiratory chain via ETF-ubiquinone oxidoreductase (ETF dehydrogenase). The protein is Electron transfer flavoprotein subunit beta (etfB) of Thermoanaerobacterium thermosaccharolyticum (strain ATCC 7956 / DSM 571 / NCIMB 9385 / NCA 3814 / NCTC 13789 / WDCM 00135 / 2032) (Clostridium thermosaccharolyticum).